A 485-amino-acid polypeptide reads, in one-letter code: Glutamate mutase epsilon subunit (485 aa).

Position 66 (arginine 66) interacts with L-glutamate. Glycine 68 is a binding site for adenosylcob(III)alamin. Arginine 100 is a binding site for L-glutamate. Asparagine 123 is a binding site for adenosylcob(III)alamin. Residues 149 to 150, glutamate 171, and tyrosine 177 each bind L-glutamate; that span reads RH. Position 180 (proline 180) interacts with adenosylcob(III)alamin. Residue tyrosine 181 coordinates L-glutamate. Adenosylcob(III)alamin-binding residues include phenylalanine 297, lysine 326, glutamate 330, and isoleucine 334.

The protein belongs to the methylaspartate mutase GlmE subunit family. As to quaternary structure, heterotetramer composed of 2 epsilon subunits (GlmE) and 2 sigma subunits (GlmS). GlmE exists as a homodimer and GlmS as a monomer. The cofactor is adenosylcob(III)alamin.

It catalyses the reaction (2S,3S)-3-methyl-L-aspartate = L-glutamate. The protein operates within amino-acid degradation; L-glutamate degradation via mesaconate pathway; acetate and pyruvate from L-glutamate: step 1/4. In terms of biological role, catalyzes the carbon skeleton rearrangement of L-glutamate to L-threo-3-methylaspartate ((2S,3S)-3-methylaspartate). In Treponema denticola (strain ATCC 35405 / DSM 14222 / CIP 103919 / JCM 8153 / KCTC 15104), this protein is Glutamate mutase epsilon subunit.